The chain runs to 237 residues: Large ribosomal subunit protein uL1 (237 aa).

The protein belongs to the universal ribosomal protein uL1 family. In terms of assembly, part of the 50S ribosomal subunit.

Functionally, binds directly to 23S rRNA. The L1 stalk is quite mobile in the ribosome, and is involved in E site tRNA release. In terms of biological role, protein L1 is also a translational repressor protein, it controls the translation of the L11 operon by binding to its mRNA. This chain is Large ribosomal subunit protein uL1, found in Thermosynechococcus vestitus (strain NIES-2133 / IAM M-273 / BP-1).